A 253-amino-acid chain; its full sequence is uncharacterized protein (253 aa).

Residues 4–73 (FGKSTADRVK…IDVSGVTVLQ (70 aa)) form the BON 1 domain. Residues 79-93 (AAQTAPTTPAQTSPS) are compositionally biased toward low complexity. Residues 79–105 (AAQTAPTTPAQTSPSVQDSPSTPVQMP) are disordered. One can recognise a BON 2 domain in the interval 119–188 (DTSRIAKAVL…VDISGLRVAQ (70 aa)). Residues 204 to 251 (TVYTVKPGDSLSKIAEHYYGDQMEYKKIAHYNNISNPDLIQPGQKLRI) enclose the LysM domain.

This is an uncharacterized protein from Deinococcus radiodurans (strain ATCC 13939 / DSM 20539 / JCM 16871 / CCUG 27074 / LMG 4051 / NBRC 15346 / NCIMB 9279 / VKM B-1422 / R1).